Reading from the N-terminus, the 606-residue chain is UvrABC system protein C (606 aa).

A GIY-YIG domain is found at glutamine 19 to isoleucine 97. In terms of domain architecture, UVR spans glutamate 207 to isoleucine 242.

It belongs to the UvrC family. Interacts with UvrB in an incision complex.

It is found in the cytoplasm. Its function is as follows. The UvrABC repair system catalyzes the recognition and processing of DNA lesions. UvrC both incises the 5' and 3' sides of the lesion. The N-terminal half is responsible for the 3' incision and the C-terminal half is responsible for the 5' incision. The protein is UvrABC system protein C of Wolbachia sp. subsp. Brugia malayi (strain TRS).